Reading from the N-terminus, the 201-residue chain is Adenylyl-sulfate kinase (201 aa).

35–42 contacts ATP; the sequence is GLSGSGKS. Catalysis depends on Ser109, which acts as the Phosphoserine intermediate.

It belongs to the APS kinase family.

The enzyme catalyses adenosine 5'-phosphosulfate + ATP = 3'-phosphoadenylyl sulfate + ADP + H(+). It participates in sulfur metabolism; hydrogen sulfide biosynthesis; sulfite from sulfate: step 2/3. Its function is as follows. Catalyzes the synthesis of activated sulfate. The sequence is that of Adenylyl-sulfate kinase from Escherichia coli (strain ATCC 8739 / DSM 1576 / NBRC 3972 / NCIMB 8545 / WDCM 00012 / Crooks).